A 217-amino-acid polypeptide reads, in one-letter code: Octanoyltransferase (217 aa).

One can recognise a BPL/LPL catalytic domain in the interval 32-207 (SDSPDELWIV…TLSQLLGYQQ (176 aa)). Residues 71–78 (RGGQVTYH), 138–140 (SLG), and 151–153 (GLA) each bind substrate. Cys-169 functions as the Acyl-thioester intermediate in the catalytic mechanism.

This sequence belongs to the LipB family.

It localises to the cytoplasm. The catalysed reaction is octanoyl-[ACP] + L-lysyl-[protein] = N(6)-octanoyl-L-lysyl-[protein] + holo-[ACP] + H(+). It participates in protein modification; protein lipoylation via endogenous pathway; protein N(6)-(lipoyl)lysine from octanoyl-[acyl-carrier-protein]: step 1/2. Catalyzes the transfer of endogenously produced octanoic acid from octanoyl-acyl-carrier-protein onto the lipoyl domains of lipoate-dependent enzymes. Lipoyl-ACP can also act as a substrate although octanoyl-ACP is likely to be the physiological substrate. The chain is Octanoyltransferase from Shewanella sp. (strain ANA-3).